The primary structure comprises 150 residues: Globin-5 (150 aa).

Residues 11–150 enclose the Globin domain; the sequence is PLSAAEKTKI…MICILLRSAY (140 aa). Heme b is bound by residues H74 and H106.

The protein belongs to the globin family. In terms of assembly, monomer at high oxygen tension and high pH and dimeric at low oxygen tension and lower pH.

The sequence is that of Globin-5 from Petromyzon marinus (Sea lamprey).